Reading from the N-terminus, the 643-residue chain is Inner kinetochore subunit cnp3 (643 aa).

Disordered regions lie at residues 55 to 209 (SIHL…AFPD) and 224 to 386 (SIKD…QSDS). Composition is skewed to low complexity over residues 85–97 (AASD…SSSD) and 104–125 (DIPS…GSSG). The segment covering 166-185 (DFSRIKASPDRKKFEPRRST) has biased composition (basic and acidic residues). 3 stretches are compositionally biased toward polar residues: residues 235-261 (YIQT…PSKQ), 295-304 (LNRSLANNSQ), and 313-322 (KPLQESSINS). Basic residues-rich tracts occupy residues 332-341 (VKRKRGRPRK) and 360-370 (GAKKPAIRNAK). A DNA-binding region (a.T hook) is located at residues 333-345 (KRKRGRPRKNKLE).

Belongs to the CENP-C/MIF2 family. As to quaternary structure, component of the inner kinetochore constitutive centromere-associated network (CCAN) (also known as central kinetochore Sim4 complex in fission yeast), which is composed of at least cnl2, cnp3, cnp20, fta1, fta2, fta3, fta4, fta6, fta7, mal2, mhf1, mhf2, mis6, mis15, mis17, sim4 and wip1.

The protein resides in the nucleus. Its subcellular location is the nucleoplasm. Component of the kinetochore, a multiprotein complex that assembles on centromeric DNA and attaches chromosomes to spindle microtubules, mediating chromosome segregation and sister chromatid segregation during meiosis and mitosis. Component of the inner kinetochore constitutive centromere-associated network (CCAN), which serves as a structural platform for outer kinetochore assembly. The polypeptide is Inner kinetochore subunit cnp3 (cnp3) (Schizosaccharomyces pombe (strain 972 / ATCC 24843) (Fission yeast)).